Reading from the N-terminus, the 287-residue chain is Probable aquaporin PIP1-5 (287 aa).

N-acetylmethionine is present on methionine 1. Residues 1–34 (MEGKEEDVNVGANKFPERQPIGTAAQTESKDYKE) form a disordered region. Residues 1-55 (MEGKEEDVNVGANKFPERQPIGTAAQTESKDYKEPPPAPFFEPGELKSWSFYRAG) lie on the Cytoplasmic side of the membrane. The helical transmembrane segment at 56 to 76 (IAEFIATFLFLYVTVLTVMGV) threads the bilayer. The Extracellular portion of the chain corresponds to 77–92 (KRAPNMCASVGIQGIA). The helical transmembrane segment at 93 to 113 (WAFGGMIFALVYCTAGISGGH) threads the bilayer. At 114–133 (INPAVTFGLFLARKLSLTRA) the chain is on the cytoplasmic side. The short motif at 115-117 (NPA) is the NPA 1 element. The helical transmembrane segment at 134–154 (LFYIVMQCLGAICGAGVVKGF) threads the bilayer. The Extracellular portion of the chain corresponds to 155-175 (QPGLYQTNGGGANVVAHGYTK). Residues 176–196 (GSGLGAEIVGTFVLVYTVFSA) traverse the membrane as a helical segment. Over 197–209 (TDAKRSARDSHVP) the chain is Cytoplasmic. Residues 210 to 230 (ILAPLPIGFAVFLVHLATIPI) form a helical membrane-spanning segment. Residues 231–257 (TGTGINPARSLGAAIIYNKDHAWDDHW) lie on the Extracellular side of the membrane. The short motif at 236–238 (NPA) is the NPA 2 element. Residues 258–278 (IFWVGPFIGAALAALYHQIVI) form a helical membrane-spanning segment. Residues 279-287 (RAIPFKSKT) are Cytoplasmic-facing. Serine 285 is subject to Phosphoserine.

Belongs to the MIP/aquaporin (TC 1.A.8) family. PIP (TC 1.A.8.11) subfamily. In terms of tissue distribution, predominantly expressed in green siliques. Also expressed above ground, in roots and flower buds.

Its subcellular location is the cell membrane. Its function is as follows. Aquaporins facilitate the transport of water and small neutral solutes across cell membranes. This is Probable aquaporin PIP1-5 (PIP1-5) from Arabidopsis thaliana (Mouse-ear cress).